Consider the following 272-residue polypeptide: Ribosomal RNA small subunit methyltransferase A (272 aa).

S-adenosyl-L-methionine contacts are provided by N18, L20, G45, E66, D91, and N113.

The protein belongs to the class I-like SAM-binding methyltransferase superfamily. rRNA adenine N(6)-methyltransferase family. RsmA subfamily.

The protein resides in the cytoplasm. The enzyme catalyses adenosine(1518)/adenosine(1519) in 16S rRNA + 4 S-adenosyl-L-methionine = N(6)-dimethyladenosine(1518)/N(6)-dimethyladenosine(1519) in 16S rRNA + 4 S-adenosyl-L-homocysteine + 4 H(+). Functionally, specifically dimethylates two adjacent adenosines (A1518 and A1519) in the loop of a conserved hairpin near the 3'-end of 16S rRNA in the 30S particle. May play a critical role in biogenesis of 30S subunits. The sequence is that of Ribosomal RNA small subunit methyltransferase A from Yersinia enterocolitica serotype O:8 / biotype 1B (strain NCTC 13174 / 8081).